The primary structure comprises 185 residues: RING-H2 finger protein ATL8 (185 aa).

A helical transmembrane segment spans residues 28–48 (LVLILAVLLCALTCIIGLIAV). The segment at 104 to 146 (CAICLTEFAAGDELRVLPQCGHGFHVSCIDTWLGSHSSCPSCR) adopts an RING-type; atypical zinc-finger fold. Residues 161-185 (PGSSSSGPEPDTRIKQREDGPDNLP) form a disordered region. A compositionally biased stretch (basic and acidic residues) spans 170–185 (PDTRIKQREDGPDNLP).

It belongs to the RING-type zinc finger family. ATL subfamily.

The protein localises to the membrane. The catalysed reaction is S-ubiquitinyl-[E2 ubiquitin-conjugating enzyme]-L-cysteine + [acceptor protein]-L-lysine = [E2 ubiquitin-conjugating enzyme]-L-cysteine + N(6)-ubiquitinyl-[acceptor protein]-L-lysine.. It participates in protein modification; protein ubiquitination. The protein is RING-H2 finger protein ATL8 (ATL8) of Arabidopsis thaliana (Mouse-ear cress).